The sequence spans 606 residues: Endonuclease 8-like 3 (606 aa).

Val-2 serves as the catalytic Schiff-base intermediate with DNA; via amino nitrogen. The disordered stretch occupies residues 31–51; the sequence is ALQGLGGPGSPPAAPGPMGTS. Residues Asn-194 and Arg-273 each coordinate DNA. The FPG-type zinc-finger motif lies at 249–283; it reads KVYKRPNCGQCCCKITVCRLGENNRMTYFCPHCQK. The RanBP2-type zinc-finger motif lies at 319 to 348; sequence SEEQWTCEVCTLINKLSSKTCDACLTSRPA. At Ser-451 the chain carries Phosphoserine. The Zn(2+) site is built by Cys-508, His-511, Cys-534, Cys-542, Cys-555, His-557, Cys-580, and Cys-588. 2 GRF-type zinc fingers span residues 508 to 551 and 555 to 597; these read CSKH…ADLS and CNHG…AQNG.

It belongs to the FPG family.

Its subcellular location is the nucleus. It is found in the chromosome. It catalyses the reaction 2'-deoxyribonucleotide-(2'-deoxyribose 5'-phosphate)-2'-deoxyribonucleotide-DNA = a 3'-end 2'-deoxyribonucleotide-(2,3-dehydro-2,3-deoxyribose 5'-phosphate)-DNA + a 5'-end 5'-phospho-2'-deoxyribonucleoside-DNA + H(+). DNA glycosylase which prefers single-stranded DNA (ssDNA), or partially ssDNA structures such as bubble and fork structures, to double-stranded DNA (dsDNA). Mediates interstrand cross-link repair in response to replication stress: acts by mediating DNA glycosylase activity, cleaving one of the two N-glycosyl bonds comprising the interstrand cross-link, which avoids the formation of a double-strand break but generates an abasic site that is bypassed by translesion synthesis polymerases. In vitro, displays strong glycosylase activity towards the hydantoin lesions spiroiminodihydantoin (Sp) and guanidinohydantoin (Gh) in both ssDNA and dsDNA; also recognizes FapyA, FapyG, 5-OHU, 5-OHC, 5-OHMH, Tg and 8-oxoA lesions in ssDNA. No activity on 8-oxoG detected. Also shows weak DNA-(apurinic or apyrimidinic site) lyase activity. In vivo, appears to be the primary enzyme involved in removing Sp and Gh from ssDNA in neonatal tissues. The chain is Endonuclease 8-like 3 (NEIL3) from Bos taurus (Bovine).